A 324-amino-acid polypeptide reads, in one-letter code: AT-hook motif nuclear-localized protein 24 (324 aa).

The span at 1–12 (MDPVQSHGSQSS) shows a compositional bias: polar residues. Disordered regions lie at residues 1 to 122 (MDPV…KPPI) and 262 to 324 (MQTP…RPPY). Over residues 24 to 33 (LHLQQQQQEF) the composition is skewed to low complexity. A compositionally biased stretch (polar residues) spans 69–79 (NIDNIANNSGS). Positions 88-99 (GGSGEGGGGSGG) are enriched in gly residues. Positions 105–117 (RRPRGRPAGSKNK) form a DNA-binding region, a.T hook. Residues 129 to 268 (ANALRTHVME…EDEMQTPVHG (140 aa)) enclose the PPC domain. A compositionally biased stretch (low complexity) spans 280–297 (MMGQQLQHQQQAMSGHQG). Positions 304 to 318 (GSVQLQQQHDQSYWS) are enriched in polar residues.

Its subcellular location is the nucleus. Transcription factor that specifically binds AT-rich DNA sequences related to the nuclear matrix attachment regions (MARs). This Arabidopsis thaliana (Mouse-ear cress) protein is AT-hook motif nuclear-localized protein 24.